Reading from the N-terminus, the 195-residue chain is Packaging protein 2 (195 aa).

The disordered stretch occupies residues 1-124; it reads MAPKKKLQLP…QEQQQRQGYR (124 aa). Over residues 15 to 53 the composition is skewed to acidic residues; sequence TDEEEYWDSQAEEVLDEEEEMMEDWDSLDEASEAEEVSD. A compositionally biased stretch (low complexity) spans 54–63; sequence ETPSPSVAFP.

It belongs to the adenoviridae splicing factor family. As to quaternary structure, part of a genome packaging complex composed of packaging proteins 1, 2 and 3; this complex specifically binds to the packaging sequence on the left end of viral genomic DNA and performs packaging of the viral genome. Self-assembles into higher-order structures.

Its subcellular location is the host nucleus. Its function is as follows. Component of the packaging machinery which encapsidates the viral DNA into preformed capsids and transcriptional activator of the viral major late promoter (MLP). Binds, along with packaging proteins 1 and 3, to the specific packaging sequence on the left end of viral genomic DNA and plays an active role in packaging of the viral genome into preformed capsids. Specifically binds to the 5'-TTTG-3' nucleotides of the repeats making up the packaging sequence. Forms a transcription factor called DEF-A through cooperative binding with packaging protein 1. DEF-A binds to downstream elements of the major late promoter (MLP) and stimulates transcription from the MLP after initiation of viral DNA replication. Simultaneously suppresses early gene expression and is thus likely to participate in the early-late switch in the expression pattern of the late viral proteins. May as well enhance transcription from IVa2 and pIX promoters. The protein is Packaging protein 2 of Homo sapiens (Human).